We begin with the raw amino-acid sequence, 223 residues long: Sigma non-opioid intracellular receptor 1 (223 aa).

Residues 1-9 (MPWAAGRRW) lie on the Lumenal side of the membrane. The targeting to endoplasmic reticulum-associated lipid droplets stretch occupies residues 2 to 8 (PWAAGRR). Residues 10-30 (AWITLILTIIAVLIQAAWLWL) form a helical membrane-spanning segment. Residues 31–223 (GTQNFVFSRE…LTTYLFGQDS (193 aa)) lie on the Cytoplasmic side of the membrane. The interval 99–106 (SLSEYVLL) is important for ligand-binding. The C-terminal hydrophobic region stretch occupies residues 177-223 (VIPSTLFFALADTFFSTQDYLTLFYTLRAYARGLRLELTTYLFGQDS).

It belongs to the ERG2 family. As to quaternary structure, homotrimer. Interacts with KCNA4. Interacts with KCNA2; cocaine consumption leads to increased interaction. Forms a ternary complex with ANK2 and ITPR3. The complex is disrupted by agonists. Interacts with RNF112 in an oxidative stress-regulated manner. In terms of tissue distribution, widely expressed with higher expression in liver, brain, kidney and thymus. Expressed throughout the brain with higher expression within cerebral cortex, hippocampus and cerebellum. Within the hippocampus expressed in cornu ammonis pyramidal neurons, the granular cells of the dentate gyrus as well as interneurons. Within the cerebellum, expressed in Purkinje cell bodies. Highly expressed in the brainstem and motor neurons of the spinal cord. Expressed by neural retina, retinal pigment epithelial cells and lens.

Its subcellular location is the nucleus inner membrane. The protein resides in the nucleus outer membrane. The protein localises to the nucleus envelope. It is found in the cytoplasmic vesicle. It localises to the endoplasmic reticulum membrane. Its subcellular location is the membrane. The protein resides in the lipid droplet. The protein localises to the cell junction. It is found in the cell membrane. It localises to the cell projection. Its subcellular location is the growth cone. The protein resides in the postsynaptic density membrane. Its function is as follows. Functions in lipid transport from the endoplasmic reticulum and is involved in a wide array of cellular functions probably through regulation of the biogenesis of lipid microdomains at the plasma membrane. Involved in the regulation of different receptors it plays a role in BDNF signaling and EGF signaling. Also regulates ion channels like the potassium channel and could modulate neurotransmitter release. Plays a role in calcium signaling through modulation together with ANK2 of the ITP3R-dependent calcium efflux at the endoplasmic reticulum. Plays a role in several other cell functions including proliferation, survival and death. Originally identified for its ability to bind various psychoactive drugs it is involved in learning processes, memory and mood alteration. Necessary for proper mitochondrial axonal transport in motor neurons, in particular the retrograde movement of mitochondria. Plays a role in protecting cells against oxidative stress-induced cell death via its interaction with RNF112. This is Sigma non-opioid intracellular receptor 1 (Sigmar1) from Mus musculus (Mouse).